The chain runs to 257 residues: MLPSELVKYKKKSQKIIALTAWDSISGSLAEHSGADIVLVGDSLAMVCLGYKSTLPVTLENMIYHTNAVSRGFSKEIEEQSLLVCDMPFLTYQCGENKAVEYAGKIIKNTYAKAVKVEGADPEVQNVISRLIRMGIPVMGHLGLTPQSYLNLGFKQQGNNSESHEKIKRDALSLEKLGCFSIVLEHIPELLAKEIQTELEIPTIGIGAGKFCDGQVRVTADLLGLNDKQPPFCRPIIDGKKIFGEKLKEWVAAEKLN.

2 residues coordinate Mg(2+): D42 and D86. 3-methyl-2-oxobutanoate is bound by residues 42-43 (DS), D86, and K116. Residue E118 participates in Mg(2+) binding. Catalysis depends on E185, which acts as the Proton acceptor.

The protein belongs to the PanB family. As to quaternary structure, homodecamer; pentamer of dimers. Mg(2+) is required as a cofactor.

It is found in the cytoplasm. It carries out the reaction 3-methyl-2-oxobutanoate + (6R)-5,10-methylene-5,6,7,8-tetrahydrofolate + H2O = 2-dehydropantoate + (6S)-5,6,7,8-tetrahydrofolate. It functions in the pathway cofactor biosynthesis; (R)-pantothenate biosynthesis; (R)-pantoate from 3-methyl-2-oxobutanoate: step 1/2. Catalyzes the reversible reaction in which hydroxymethyl group from 5,10-methylenetetrahydrofolate is transferred onto alpha-ketoisovalerate to form ketopantoate. This chain is 3-methyl-2-oxobutanoate hydroxymethyltransferase, found in Prochlorococcus marinus subsp. pastoris (strain CCMP1986 / NIES-2087 / MED4).